The following is an 83-amino-acid chain: Apolipoprotein C-I, basic form (83 aa).

The N-terminal stretch at 1 to 26 is a signal peptide; that stretch reads MRLFLSLPVLVVVLSIVLEGPAPAQG.

This sequence belongs to the apolipoprotein C1 family.

It localises to the secreted. In terms of biological role, inhibitor of lipoprotein binding to the low density lipoprotein (LDL) receptor, LDL receptor-related protein, and very low density lipoprotein (VLDL) receptor. Associates with high density lipoproteins (HDL) and the triacylglycerol-rich lipoproteins in the plasma and makes up about 10% of the protein of the VLDL and 2% of that of HDL. Appears to interfere directly with fatty acid uptake and is also the major plasma inhibitor of cholesteryl ester transfer protein (CETP). Binds free fatty acids and reduces their intracellular esterification. Modulates the interaction of APOE with beta-migrating VLDL and inhibits binding of beta-VLDL to the LDL receptor-related protein. In Pan troglodytes (Chimpanzee), this protein is Apolipoprotein C-I, basic form (APOC1B).